The primary structure comprises 561 residues: Nephronectin (561 aa).

A signal peptide spans M1–A19. The EGF-like 1 domain occupies S52–N87. Intrachain disulfides connect C56–C69, C60–C75, C77–C86, C93–C104, C100–C113, and C115–C127. The EGF-like 2; calcium-binding domain maps to D89–S128. Residues S132 to V168 enclose the EGF-like 3 domain. The EGF-like 4; calcium-binding domain occupies D169 to H213. Disulfide bonds link C173/C186, C180/C195, C197/C212, C218/C231, C225/C240, and C242/C253. One can recognise an EGF-like 5; calcium-binding domain in the interval D214 to V254. Positions P266–V370 are disordered. A compositionally biased stretch (low complexity) spans T307–T316. Residues R317–E348 show a composition bias toward pro residues. Positions T352–R366 are enriched in low complexity. The short motif at R382–D384 is the Integrin interaction element. Residues H420–C561 form the MAM domain.

It belongs to the nephronectin family. As to quaternary structure, homodimer and homotrimer. As to expression, expressed in kidney (at protein level).

It is found in the secreted. The protein resides in the extracellular space. The protein localises to the extracellular matrix. Functional ligand of integrin alpha-8/beta-1 in kidney development. Regulates the expression of GDNF with integrin alpha-8/beta-1 which is essential for kidney development. May also play a role in the development and function of various tissues, regulating cell adhesion, spreading and survival through the binding of several integrins. This chain is Nephronectin (Npnt), found in Mus musculus (Mouse).